The following is a 263-amino-acid chain: 3-deoxy-manno-octulosonate cytidylyltransferase 1 (263 aa).

This sequence belongs to the KdsB family.

It is found in the cytoplasm. It catalyses the reaction 3-deoxy-alpha-D-manno-oct-2-ulosonate + CTP = CMP-3-deoxy-beta-D-manno-octulosonate + diphosphate. The protein operates within nucleotide-sugar biosynthesis; CMP-3-deoxy-D-manno-octulosonate biosynthesis; CMP-3-deoxy-D-manno-octulosonate from 3-deoxy-D-manno-octulosonate and CTP: step 1/1. Its pathway is bacterial outer membrane biogenesis; lipopolysaccharide biosynthesis. Its function is as follows. Activates KDO (a required 8-carbon sugar) for incorporation into bacterial lipopolysaccharide in Gram-negative bacteria. This chain is 3-deoxy-manno-octulosonate cytidylyltransferase 1, found in Burkholderia ambifaria (strain MC40-6).